A 202-amino-acid chain; its full sequence is Probable cytochrome c oxidase subunit 3 (202 aa).

5 consecutive transmembrane segments (helical) span residues 30–50 (VVWLSSELMFFAGLFAMYFTA), 69–89 (AVPVTLVLIASSFTCQMGVFS), 101–121 (WYVITLLMGLFFVLGQGYEYY), 141–161 (LATGFHGLHVTGGLIAFIFLL), and 178–198 (IVVSYYWHFVDIVWIALFTVI).

It belongs to the cytochrome c oxidase subunit 3 family.

It localises to the cell membrane. The catalysed reaction is 4 Fe(II)-[cytochrome c] + O2 + 8 H(+)(in) = 4 Fe(III)-[cytochrome c] + 2 H2O + 4 H(+)(out). The polypeptide is Probable cytochrome c oxidase subunit 3 (ctaE) (Mycobacterium leprae (strain TN)).